A 130-amino-acid polypeptide reads, in one-letter code: Putative F-box protein At1g77880 (130 aa).

Residues 18-64 enclose the F-box domain; sequence KVSIPYLPDDLLLNCLARISRLYYPTLSLVSKRFRSLLASTELYETR.

The protein is Putative F-box protein At1g77880 of Arabidopsis thaliana (Mouse-ear cress).